We begin with the raw amino-acid sequence, 559 residues long: Cytoplasmic polyadenylation element-binding protein 1 (559 aa).

The disordered stretch occupies residues 223-244 (RLDHSSSPLTPPPSATSSGGLS). 2 consecutive RRM domains span residues 304-401 (CKVF…DAQV) and 423-504 (NTVF…PYLE). Residues cysteine 508, cysteine 511, cysteine 520, cysteine 525, cysteine 530, cysteine 533, histidine 538, and histidine 546 each coordinate Zn(2+).

This sequence belongs to the RRM CPEB family. In terms of assembly, interacts with kinesin, dynein, APLP1, APLP2, TENT2/GLD2 and APP. Both phosphorylated and non phosphorylated forms interact with APLP1. Interacts with TENT4B; the interaction is required for TENT4B-mediated translational control.

Its subcellular location is the cytoplasm. Its function is as follows. Sequence-specific RNA-binding protein that regulates mRNA cytoplasmic polyadenylation and translation initiation during oocyte maturation and early development. Binds to the cytoplasmic polyadenylation element (CPE), an uridine-rich sequence element (consensus sequence 5'-UUUUUAU-3') within the mRNA 3'-UTR. The protein is Cytoplasmic polyadenylation element-binding protein 1 (cpeb1) of Carassius auratus (Goldfish).